The primary structure comprises 201 residues: Dephospho-CoA kinase (201 aa).

The DPCK domain maps to 3–201 (WIGLTGGIAC…KWLEELKNQN (199 aa)). 11-16 (ACGKST) serves as a coordination point for ATP.

The protein belongs to the CoaE family.

The protein resides in the cytoplasm. It carries out the reaction 3'-dephospho-CoA + ATP = ADP + CoA + H(+). Its pathway is cofactor biosynthesis; coenzyme A biosynthesis; CoA from (R)-pantothenate: step 5/5. In terms of biological role, catalyzes the phosphorylation of the 3'-hydroxyl group of dephosphocoenzyme A to form coenzyme A. The chain is Dephospho-CoA kinase from Bdellovibrio bacteriovorus (strain ATCC 15356 / DSM 50701 / NCIMB 9529 / HD100).